Consider the following 635-residue polypeptide: MAGGAGWAGAPAALLRSVRRLREVFEVCGRDPDGFLRVERVAALGLRFGQGEEVEKLVKCLDPNDLGRINFKDFCRGVFAMKGCEELLKDVLSVESAGTLPCSPDIPDCVEQGSDFSGSTDGEQLPREPDFFQEDEEEAMTLALPEGPQELDMDSPMESSQGPEGSVKGCGEEKEPELGGLFLPEDKCLVLTPSVTTSDLSTHSTASLISNEEQFEDYGEGDDVDCAPSSPCPDDETRTNVYSDLGSSVSSSAGQTPRKMRHAYNSELLDVYCSQCCKKINLLNDLEARLKNLKANSPNRKISSTAFGRQLMHNSNFSSSNGSTEDLFRDSIDSCDNDITEKVSFLEKKVTELENDSLTSGGLKSKLKQENMQLVHRVHELEEMVKDQETTAEQALEEEARRHREVYCKLEREKSTELELLNTRVQQLEEENTDLRTTVARLKSQTEKLDEERQRMSDRLEDTSLRLKDEMDLYKRMMDKLRQNRLEFQKEREATQELIEDLRRELEHLQMYKLDCERPGRGRSSSGLGEFNARAREVELEHEVKRLKQENHKLRDQNDDLNGQILSLSLYEAKNLFATQTKAQSLAAEIDTASRDELMEALKEQEEINFRLRQYMDKIILAILDHNPSILEIKH.

Residues 49–84 (GQGEEVEKLVKCLDPNDLGRINFKDFCRGVFAMKGC) form the EF-hand domain. Ca(2+) is bound by residues Asp-62, Asn-64, Arg-68, and Asp-73. The tract at residues 82–635 (KGCEELLKDV…HNPSILEIKH (554 aa)) is necessary for interaction with RAB11A, subcellular location, homo- or heterooligomerization. Disordered regions lie at residues 147 to 176 (GPQE…EKEP) and 216 to 258 (EDYG…QTPR). Positions 216–225 (EDYGEGDDVD) are enriched in acidic residues. A coiled-coil region spans residues 279 to 615 (KINLLNDLEA…EEINFRLRQY (337 aa)). Residues 572 to 634 (EAKNLFATQT…DHNPSILEIK (63 aa)) form the FIP-RBD domain.

Homodimer. Forms a complex with Rab11 (RAB11A or RAB11B) and ARF6. Interacts with RAB11A; the interaction is direct. Forms a heterooligomeric complex with RAB11FIP2, RAB11FIP3 and RAB11FIP5. Interacts with ECPAS. In terms of tissue distribution, strongly expressed in the developing retina. Expressed predominantly in neural tissues.

Its subcellular location is the recycling endosome membrane. The protein localises to the cleavage furrow. The protein resides in the midbody. It localises to the cytoplasmic vesicle. Functionally, acts as a regulator of endocytic traffic by participating in membrane delivery. Required for the abscission step in cytokinesis, possibly by acting as an 'address tag' delivering recycling endosome membranes to the cleavage furrow during late cytokinesis. May play a role in differentiation during retinal development, in a Rab11-independent manner. The sequence is that of Rab11 family-interacting protein 4 (Rab11fip4) from Mus musculus (Mouse).